Reading from the N-terminus, the 212-residue chain is NADH-quinone oxidoreductase subunit I (212 aa).

2 consecutive 4Fe-4S ferredoxin-type domains span residues 76 to 105 (RLLE…IITD) and 115 to 144 (LNYS…HGDL). The [4Fe-4S] cluster site is built by Cys-85, Cys-88, Cys-91, Cys-95, Cys-124, Cys-127, Cys-130, and Cys-134.

Belongs to the complex I 23 kDa subunit family. As to quaternary structure, NDH-1 is composed of 14 different subunits. Subunits NuoA, H, J, K, L, M, N constitute the membrane sector of the complex. [4Fe-4S] cluster is required as a cofactor.

It localises to the cell inner membrane. It catalyses the reaction a quinone + NADH + 5 H(+)(in) = a quinol + NAD(+) + 4 H(+)(out). In terms of biological role, NDH-1 shuttles electrons from NADH, via FMN and iron-sulfur (Fe-S) centers, to quinones in the respiratory chain. The immediate electron acceptor for the enzyme in this species is believed to be ubiquinone. Couples the redox reaction to proton translocation (for every two electrons transferred, four hydrogen ions are translocated across the cytoplasmic membrane), and thus conserves the redox energy in a proton gradient. The sequence is that of NADH-quinone oxidoreductase subunit I from Helicobacter hepaticus (strain ATCC 51449 / 3B1).